We begin with the raw amino-acid sequence, 414 residues long: Histidine--tRNA ligase (414 aa).

Belongs to the class-II aminoacyl-tRNA synthetase family. As to quaternary structure, homodimer.

The protein resides in the cytoplasm. It carries out the reaction tRNA(His) + L-histidine + ATP = L-histidyl-tRNA(His) + AMP + diphosphate + H(+). This Mycoplasma mycoides subsp. mycoides SC (strain CCUG 32753 / NCTC 10114 / PG1) protein is Histidine--tRNA ligase.